Reading from the N-terminus, the 105-residue chain is Small ribosomal subunit protein uS10 (105 aa).

It belongs to the universal ribosomal protein uS10 family. Part of the 30S ribosomal subunit.

Functionally, involved in the binding of tRNA to the ribosomes. The chain is Small ribosomal subunit protein uS10 from Lawsonia intracellularis (strain PHE/MN1-00).